A 200-amino-acid chain; its full sequence is NADH-quinone oxidoreductase subunit C (200 aa).

Belongs to the complex I 30 kDa subunit family. NDH-1 is composed of 14 different subunits. Subunits NuoB, C, D, E, F, and G constitute the peripheral sector of the complex.

The protein resides in the cell inner membrane. The catalysed reaction is a quinone + NADH + 5 H(+)(in) = a quinol + NAD(+) + 4 H(+)(out). NDH-1 shuttles electrons from NADH, via FMN and iron-sulfur (Fe-S) centers, to quinones in the respiratory chain. The immediate electron acceptor for the enzyme in this species is believed to be ubiquinone. Couples the redox reaction to proton translocation (for every two electrons transferred, four hydrogen ions are translocated across the cytoplasmic membrane), and thus conserves the redox energy in a proton gradient. This is NADH-quinone oxidoreductase subunit C from Paraburkholderia phytofirmans (strain DSM 17436 / LMG 22146 / PsJN) (Burkholderia phytofirmans).